The primary structure comprises 141 residues: Small ribosomal subunit protein uS12 (141 aa).

The protein belongs to the universal ribosomal protein uS12 family. In terms of assembly, part of the 30S ribosomal subunit.

Its function is as follows. With S4 and S5 plays an important role in translational accuracy. Located at the interface of the 30S and 50S subunits. This is Small ribosomal subunit protein uS12 from Methanosphaera stadtmanae (strain ATCC 43021 / DSM 3091 / JCM 11832 / MCB-3).